Consider the following 455-residue polypeptide: Bifunctional protein GlmU (455 aa).

Residues 1-227 (MGLSVIILAA…CEEVQGVNDR (227 aa)) are pyrophosphorylase. Residues 8–11 (LAAG), Lys-22, Gln-73, 78–79 (GT), 100–102 (YGD), Gly-137, Glu-152, Asn-167, and Asn-225 contribute to the UDP-N-acetyl-alpha-D-glucosamine site. Asp-102 provides a ligand contact to Mg(2+). Mg(2+) is bound at residue Asn-225. The segment at 228–248 (WELTKLERYYQRLMAKKLSLA) is linker. Residues 249 to 455 (GVTIIDPERF…KGWHRPTKKE (207 aa)) are N-acetyltransferase. Residues Arg-332 and Lys-350 each contribute to the UDP-N-acetyl-alpha-D-glucosamine site. The Proton acceptor role is filled by His-362. UDP-N-acetyl-alpha-D-glucosamine is bound by residues Tyr-365 and Asn-376. Acetyl-CoA is bound by residues Ala-379, 385–386 (NY), Ser-404, Ala-422, and Arg-439.

In the N-terminal section; belongs to the N-acetylglucosamine-1-phosphate uridyltransferase family. It in the C-terminal section; belongs to the transferase hexapeptide repeat family. As to quaternary structure, homotrimer. Requires Mg(2+) as cofactor.

It localises to the cytoplasm. It catalyses the reaction alpha-D-glucosamine 1-phosphate + acetyl-CoA = N-acetyl-alpha-D-glucosamine 1-phosphate + CoA + H(+). The enzyme catalyses N-acetyl-alpha-D-glucosamine 1-phosphate + UTP + H(+) = UDP-N-acetyl-alpha-D-glucosamine + diphosphate. It functions in the pathway nucleotide-sugar biosynthesis; UDP-N-acetyl-alpha-D-glucosamine biosynthesis; N-acetyl-alpha-D-glucosamine 1-phosphate from alpha-D-glucosamine 6-phosphate (route II): step 2/2. Its pathway is nucleotide-sugar biosynthesis; UDP-N-acetyl-alpha-D-glucosamine biosynthesis; UDP-N-acetyl-alpha-D-glucosamine from N-acetyl-alpha-D-glucosamine 1-phosphate: step 1/1. It participates in bacterial outer membrane biogenesis; LPS lipid A biosynthesis. Its function is as follows. Catalyzes the last two sequential reactions in the de novo biosynthetic pathway for UDP-N-acetylglucosamine (UDP-GlcNAc). The C-terminal domain catalyzes the transfer of acetyl group from acetyl coenzyme A to glucosamine-1-phosphate (GlcN-1-P) to produce N-acetylglucosamine-1-phosphate (GlcNAc-1-P), which is converted into UDP-GlcNAc by the transfer of uridine 5-monophosphate (from uridine 5-triphosphate), a reaction catalyzed by the N-terminal domain. This is Bifunctional protein GlmU from Coxiella burnetii (strain RSA 493 / Nine Mile phase I).